Consider the following 441-residue polypeptide: GTPase Der (441 aa).

EngA-type G domains are found at residues 2 to 164 (HKVA…PADD) and 173 to 343 (IRIS…DKWQ). GTP contacts are provided by residues 8–15 (GRPNVGKS), 55–59 (DTGGL), 116–119 (NKID), 179–186 (GRPNVGKS), 226–230 (DTAGI), and 288–291 (NKWD).

It belongs to the TRAFAC class TrmE-Era-EngA-EngB-Septin-like GTPase superfamily. EngA (Der) GTPase family. Associates with the 50S ribosomal subunit.

Its function is as follows. GTPase that plays an essential role in the late steps of ribosome biogenesis. The sequence is that of GTPase Der from Deinococcus deserti (strain DSM 17065 / CIP 109153 / LMG 22923 / VCD115).